The chain runs to 205 residues: Holliday junction resolvase RecU (205 aa).

Mg(2+) is bound by residues Thr-83, Asp-85, Glu-98, and Gln-117.

Belongs to the RecU family. The cofactor is Mg(2+).

It is found in the cytoplasm. It catalyses the reaction Endonucleolytic cleavage at a junction such as a reciprocal single-stranded crossover between two homologous DNA duplexes (Holliday junction).. In terms of biological role, endonuclease that resolves Holliday junction intermediates in genetic recombination. Cleaves mobile four-strand junctions by introducing symmetrical nicks in paired strands. Promotes annealing of linear ssDNA with homologous dsDNA. Required for DNA repair, homologous recombination and chromosome segregation. This is Holliday junction resolvase RecU from Streptococcus suis (strain 98HAH33).